A 188-amino-acid polypeptide reads, in one-letter code: Probable thiol:disulfide interchange protein DsbE-2 (188 aa).

Residues 1–11 (MSMLHQQKRKN) are Cytoplasmic-facing. The helical transmembrane segment at 12–32 (HFVFLPLVILLAVCALLFIGL) threads the bilayer. At 33–188 (QQDPQKIASA…KLEAENAKVR (156 aa)) the chain is on the periplasmic side. One can recognise a Thioredoxin domain in the interval 42–179 (ALIGKPVPTF…QEMFIPEWQK (138 aa)). Cys82 and Cys85 are disulfide-bonded.

This sequence belongs to the thioredoxin family. DsbE subfamily.

The protein localises to the cell inner membrane. Could be involved in disulfide bond formation. Could catalyzes a late, reductive step in the assembly of periplasmic NrfA c-type cytochrome, probably the reduction of disulfide bonds of the apocytochrome c to allow covalent linkage with the heme. Possible subunit of a heme lyase. The protein is Probable thiol:disulfide interchange protein DsbE-2 (nrfX) of Pasteurella multocida (strain Pm70).